The chain runs to 207 residues: Probable GTP-binding protein EngB (207 aa).

Residues 22–194 enclose the EngB-type G domain; sequence DLPEVAFAGR…LQRLDVALSD (173 aa). Residues 30 to 37, 57 to 61, 75 to 78, 142 to 145, and 173 to 175 each bind GTP; these read GRSNVGKS, GRTQL, DLPG, TKVD, and FSA. Ser37 and Thr59 together coordinate Mg(2+).

The protein belongs to the TRAFAC class TrmE-Era-EngA-EngB-Septin-like GTPase superfamily. EngB GTPase family. The cofactor is Mg(2+).

Its function is as follows. Necessary for normal cell division and for the maintenance of normal septation. This is Probable GTP-binding protein EngB from Syntrophotalea carbinolica (strain DSM 2380 / NBRC 103641 / GraBd1) (Pelobacter carbinolicus).